Here is a 301-residue protein sequence, read N- to C-terminus: ATP synthase gamma chain (301 aa).

It belongs to the ATPase gamma chain family. As to quaternary structure, F-type ATPases have 2 components, CF(1) - the catalytic core - and CF(0) - the membrane proton channel. CF(1) has five subunits: alpha(3), beta(3), gamma(1), delta(1), epsilon(1). CF(0) has three main subunits: a, b and c.

The protein localises to the cell inner membrane. Its function is as follows. Produces ATP from ADP in the presence of a proton gradient across the membrane. The gamma chain is believed to be important in regulating ATPase activity and the flow of protons through the CF(0) complex. The polypeptide is ATP synthase gamma chain (Helicobacter pylori (strain G27)).